Reading from the N-terminus, the 199-residue chain is Potassium-transporting ATPase KdpC subunit 2 (199 aa).

The helical transmembrane segment at 13-33 threads the bilayer; the sequence is ITLIFWLVTAIIYPLAILVVG.

This sequence belongs to the KdpC family. In terms of assembly, the system is composed of three essential subunits: KdpA, KdpB and KdpC.

The protein resides in the cell inner membrane. Part of the high-affinity ATP-driven potassium transport (or Kdp) system, which catalyzes the hydrolysis of ATP coupled with the electrogenic transport of potassium into the cytoplasm. This subunit acts as a catalytic chaperone that increases the ATP-binding affinity of the ATP-hydrolyzing subunit KdpB by the formation of a transient KdpB/KdpC/ATP ternary complex. This Nostoc sp. (strain PCC 7120 / SAG 25.82 / UTEX 2576) protein is Potassium-transporting ATPase KdpC subunit 2.